A 134-amino-acid chain; its full sequence is DNA-binding protein inhibitor ID-2 (134 aa).

Phosphoserine occurs at positions 14 and 25. The 53-residue stretch at 23 to 75 (SRSKTPVDDPMSLLYNMNDCYSKLKELVPSIPQNKKVSKMEILQHVIDYILDL) folds into the bHLH domain. Positions 106-115 (LNTDISILSL) match the Nuclear export signal motif.

As to quaternary structure, interacts with GATA4 and NKX2-5. Interacts with NR0B2. Interacts with CLOCK and BMAL1. Interacts with IFI204. Interacts with NEDD9/HEF1. Interacts with ASB4; this interaction promotes ID2 proteasomal degradation. In terms of processing, ubiquitinated in a ASB4-depedent manner, leading to proteasomal degradation. Phosphorylated in vitro by CDK1, PKA and PKC. Highly expressed in early fetal tissues, including those of the central nervous system.

Its subcellular location is the cytoplasm. The protein resides in the nucleus. Functionally, transcriptional regulator (lacking a basic DNA binding domain) which negatively regulates the basic helix-loop-helix (bHLH) transcription factors by forming heterodimers and inhibiting their DNA binding and transcriptional activity. Implicated in regulating a variety of cellular processes, including cellular growth, senescence, differentiation, apoptosis, angiogenesis, and neoplastic transformation. Inhibits skeletal muscle and cardiac myocyte differentiation. Regulates the circadian clock by repressing the transcriptional activator activity of the CLOCK-BMAL1 heterodimer. Restricts the CLOCK and BMAL1 localization to the cytoplasm. Plays a role in both the input and output pathways of the circadian clock: in the input component, is involved in modulating the magnitude of photic entrainment and in the output component, contributes to the regulation of a variety of liver clock-controlled genes involved in lipid metabolism. In Homo sapiens (Human), this protein is DNA-binding protein inhibitor ID-2 (ID2).